A 459-amino-acid chain; its full sequence is tRNA modification GTPase MnmE (459 aa).

(6S)-5-formyl-5,6,7,8-tetrahydrofolate is bound by residues Arg20, Glu85, and Arg124. The region spanning 221-380 is the TrmE-type G domain; the sequence is GLSTVIIGRP…LEEAIQSLFY (160 aa). Asn231 provides a ligand contact to K(+). GTP is bound by residues 231–236, 250–256, and 275–278; these read NVGKSS, TDIPGTT, and DTAG. Ser235 is a binding site for Mg(2+). The K(+) site is built by Thr250, Ile252, and Thr255. Residue Thr256 participates in Mg(2+) binding. (6S)-5-formyl-5,6,7,8-tetrahydrofolate is bound at residue Lys459.

It belongs to the TRAFAC class TrmE-Era-EngA-EngB-Septin-like GTPase superfamily. TrmE GTPase family. As to quaternary structure, homodimer. Heterotetramer of two MnmE and two MnmG subunits. Requires K(+) as cofactor.

The protein resides in the cytoplasm. Its function is as follows. Exhibits a very high intrinsic GTPase hydrolysis rate. Involved in the addition of a carboxymethylaminomethyl (cmnm) group at the wobble position (U34) of certain tRNAs, forming tRNA-cmnm(5)s(2)U34. The protein is tRNA modification GTPase MnmE of Bacillus subtilis (strain 168).